The primary structure comprises 503 residues: Arabinose import ATP-binding protein AraG (503 aa).

ABC transporter domains lie at 5–240 and 253–497; these read LRFD…MVGR and LGDV…LPQG. ATP is bound at residue 37 to 44; the sequence is GENGAGKS.

Belongs to the ABC transporter superfamily. Arabinose importer (TC 3.A.1.2.2) family. In terms of assembly, the complex is composed of two ATP-binding proteins (AraG), two transmembrane proteins (AraH) and a solute-binding protein (AraF).

Its subcellular location is the cell inner membrane. The catalysed reaction is L-arabinose(out) + ATP + H2O = L-arabinose(in) + ADP + phosphate + H(+). Its function is as follows. Part of the ABC transporter complex AraFGH involved in arabinose import. Responsible for energy coupling to the transport system. The protein is Arabinose import ATP-binding protein AraG of Burkholderia pseudomallei (strain K96243).